The chain runs to 800 residues: Ribosome-releasing factor 2, mitochondrial (800 aa).

The region spanning 21 to 307 (SKVRNIGIIA…AIANYLPSPS (287 aa)) is the tr-type G domain. GTP is bound by residues 30–37 (AHIDAGKT), 95–99 (DTPGH), and 147–150 (NKMD).

It belongs to the TRAFAC class translation factor GTPase superfamily. Classic translation factor GTPase family. EF-G/EF-2 subfamily.

It is found in the mitochondrion. Its function is as follows. Mitochondrial GTPase that mediates the disassembly of ribosomes from messenger RNA at the termination of mitochondrial protein biosynthesis. Not involved in the GTP-dependent ribosomal translocation step during translation elongation. The chain is Ribosome-releasing factor 2, mitochondrial from Kluyveromyces lactis (strain ATCC 8585 / CBS 2359 / DSM 70799 / NBRC 1267 / NRRL Y-1140 / WM37) (Yeast).